A 257-amino-acid polypeptide reads, in one-letter code: Steroid 5-alpha-reductase DET2 (257 aa).

6 consecutive transmembrane segments (helical) span residues 11–31 (FIVF…QFFT), 47–67 (ISPP…TIIV), 78–97 (LAFL…TIIY), 110–130 (FPLN…YIQS), 151–171 (IGLV…GVLL), and 200–220 (IMEW…AFFV).

This sequence belongs to the steroid 5-alpha reductase family. As to expression, mostly expressed in leaves and hypocotyls and, to a lower extent, in stems, cotyledons, roots, seeds and callus.

The protein localises to the membrane. It catalyses the reaction a 3-oxo-5alpha-steroid + NADP(+) = a 3-oxo-Delta(4)-steroid + NADPH + H(+). It functions in the pathway plant hormone biosynthesis; brassinosteroid biosynthesis. Its activity is regulated as follows. Repressed by steroid (4-MA, VG106, PD91, PD17, Finasteride) and non-steroid (AS601811, AFA27, AFA76, AFA131, AFA192) inhibitors; steroid inhibitors are generally more efficient. Functionally, involved in a reduction step in the biosynthesis of the plant steroid, brassinolide (BL). Can use progesterone, testosterone, androstenedione and campestenone as substrate. The polypeptide is Steroid 5-alpha-reductase DET2 (Solanum lycopersicum (Tomato)).